A 275-amino-acid polypeptide reads, in one-letter code: MSNYLIGDVHGCFDELKALLAKVNFDKEKDTLWLTGDLISRGPQSLKVLRYARSLGKALRMVLGNHDLHLLAIHAGMRKNNPKDHLTSLLAAPDVDQLMDWLRQQPLLQIDDDLKLIMTHAGIYPKWDKKTAQTCAQEIEVALRGNRLPLFLDRSHTQTPHSWSPKLKGDARLQFITNALTRMRYCFSDGSLDMTHKEIPEKVQDDLYPWFLLPRLLEPEYAITFGHWSALKGKGTPKNIYALDTGCCWGNELTLLHWEEKRYFIQPAYKCENEF.

Belongs to the Ap4A hydrolase family.

It catalyses the reaction P(1),P(4)-bis(5'-adenosyl) tetraphosphate + H2O = 2 ADP + 2 H(+). Hydrolyzes diadenosine 5',5'''-P1,P4-tetraphosphate to yield ADP. The protein is Bis(5'-nucleosyl)-tetraphosphatase, symmetrical of Hamiltonella defensa subsp. Acyrthosiphon pisum (strain 5AT).